We begin with the raw amino-acid sequence, 111 residues long: Small ribosomal subunit protein bS18 (111 aa).

The disordered stretch occupies residues 1–32 (MDLENTENVENNNNNEEEVKAKGERKAHFNKE). The span at 17-32 (EEVKAKGERKAHFNKE) shows a compositional bias: basic and acidic residues.

The protein belongs to the bacterial ribosomal protein bS18 family. In terms of assembly, part of the 30S ribosomal subunit. Forms a tight heterodimer with protein bS6.

In terms of biological role, binds as a heterodimer with protein bS6 to the central domain of the 16S rRNA, where it helps stabilize the platform of the 30S subunit. The chain is Small ribosomal subunit protein bS18 from Brachyspira hyodysenteriae (strain ATCC 49526 / WA1).